A 185-amino-acid polypeptide reads, in one-letter code: Guanylate kinase (185 aa).

One can recognise a Guanylate kinase-like domain in the interval 3 to 181; sequence TRMIIVAAPS…SYGEFKKIVE (179 aa). Position 10-17 (10-17) interacts with ATP; sequence APSGAGKS.

This sequence belongs to the guanylate kinase family.

Its subcellular location is the cytoplasm. It carries out the reaction GMP + ATP = GDP + ADP. Its function is as follows. Essential for recycling GMP and indirectly, cGMP. The protein is Guanylate kinase of Bdellovibrio bacteriovorus (strain ATCC 15356 / DSM 50701 / NCIMB 9529 / HD100).